A 134-amino-acid polypeptide reads, in one-letter code: MSWQAYVDEHLMCDVGDGQGHHLTAAAIIGHDGSVWAQSANFPQFKPQEITDIMKDFDEPGHLAPTGMFLAGLKYMVIQGEPNAVIRGKKGAGGITIKKTGQSMVFGLYEEPVTPGQCNMVVERLGDYLIEQGL.

Belongs to the profilin family. As to quaternary structure, occurs in many kinds of cells as a complex with monomeric actin in a 1:1 ratio. In terms of tissue distribution, specifically expressed in mature pollen grains. Expressed in germinating pollen grains. Expressed in growing pollen tubes (at protein level).

The protein localises to the cytoplasm. Its subcellular location is the cytoskeleton. Binds to actin monomers and regulates the organization of the actin cytoskeleton. At high concentrations, profilin prevents the polymerization of actin, whereas it enhances it at low concentrations. At low concentrations, associates with the poly-proline motif of formins to enhance actin filament elongation rate. Acts redundantly with PRF4 to regulate apical actin polymerization at the tip of pollen tube and control polarized pollen tube growth. Functions probably by favoring formin-mediated actin polymerization at pollen tube tips. The polypeptide is Profilin-5 (Arabidopsis thaliana (Mouse-ear cress)).